The sequence spans 1041 residues: MDVMDSFSEVEMPNDISSEDHLLKVIESSAEEVDIFLENCSSLYNLILDSLHNLTSKTISCECLDEMTSTLEKSAKKILAERPEAENSVLLRLNTICCAMDQLRVQHNSRMMSGADSDTASSARSSTSSSTGEMRLWLHEVERRLEINEKRIRVEPNLQLLLSDQQALQLEIQHEGQLLVNRLNKQIKDDHDSDSSEEEKRKTCVDAIRKRWHTIYLNSLSLVCRIEELINHQQASEDSESDPDLVGPPIKRARIRTVGHLTASDTEESEADEEDRHSQTETVVTEDDNVLPFAENEYESIMDGRVTVDSCTSSSEDQMVEQSTNKKWESVLQDVGYSSGENSIHEALNTCADHLVPETSDMRRKRIECSPVKAFYRTVQLEDMSDLEVTKAINHDVEEEPNLSDSMYVNHDSTFLATQNLPEYDEVMALMDDDDLPMDMSMTESFNTKWREIHGQKKPLRRASRPSREQMNLIAKSSCDASSEDSSEGENQTNLEDDPEMMSVSFNSAQFDTSSPLKRQRSARGLKNASFLYDSLEMDGSFCSTRSEMLPPCKTRSLARRKLRVRRMPRSMSDGEQLGVVSSKPEGMMTPMIRVSPPSTPVRRLLRKLDEQIRNRDSDTAPEHSDAAQAYEWDEYNPPQKDDSISDRHIQTMTDISDQLMNIDDDFAEHFGTSSAIRLIEESKSHLRVVLKALEESDSNIPQLSNFELIARSNLRQVDEALKIQSGNQPSFLETSTLQDLRSEWANLYESIRSPFARIMHQVKKFAATLQEVSSMASLGDVDIRSKEDVAKTLDAVTAIERRLSSERQELRDLLASSSFRDVAKDLSCEFESVSEGYDDAVDKIGKMAHSLSQVKGEWDAWNSRQNDIRNAMVRIESHLKEGQMDNKMIADEMELCQERMNSLETMCNYLTASLGSIQNESNSKNLPDFKAELSIYSNALARLKDRFNDMIRVPTPPTVQFHPPEPLPSLARSMTTQTAEMESETENEPLTIAEAISSSRLIKFTFALSLLAALAAIFYYHVFGKPFGPHVTYVNGPPPV.

Disordered stretches follow at residues 258 to 283, 453 to 498, and 613 to 646; these read VGHL…TETV, IHGQ…LEDD, and IRNR…DSIS. Over residues 456-465 the composition is skewed to basic residues; sequence QKKPLRRASR. Positions 613–626 are enriched in basic and acidic residues; that stretch reads IRNRDSDTAPEHSD. Coiled-coil stretches lie at residues 785–816 and 931–951; these read RSKE…DLLA and KAEL…FNDM. The KASH domain occupies 986-1041; the sequence is TENEPLTIAEAISSSRLIKFTFALSLLAALAAIFYYHVFGKPFGPHVTYVNGPPPV. Residues 1005 to 1024 form a helical; Anchor for type IV membrane protein membrane-spanning segment; it reads FTFALSLLAALAAIFYYHVF.

As to quaternary structure, component of the unc-83-unc-84 LINC complex which contains at least unc-83 and unc-84. Within the unc-83-unc-84 LINC complex interacts with unc-84 (via C-terminus); the interaction is probably required to recruit unc-83 to the nuclear envelope where it then recruits dynein and kinesin-1 complexes to regulate nuclear migration. Interacts with bicd-1 and dlc-1. Interacts with nud-2 (via C-terminus); the interaction is direct, and is required for recruitment of nud-2 to the nuclear envelope. Interacts with klc-2; the interaction is direct. As to expression, predominantly expressed in migratory nuclei. Expressed in a variety of cell-types, including cells around the pharynx and in the uterus.

It is found in the nucleus membrane. It localises to the nucleus outer membrane. Its function is as follows. Cargo-specific adapter that is involved in nuclear migration during development and thereafter. Component of the unc-83-unc-84 LINC (LInker of Nucleoskeleton and Cytoskeleton) complex where it interacts with unc-84 to form a bridge connecting the nuclear envelope to the cytoskeleton which allows for nuclear transport along microtubules. Within the complex, connects the nuclear envelope to the microtubule cytoskeleton through the kinesin-1 light chain protein klc-2 (most likely within the Kinesin 1 motor complex) to regulate nuclear migrations. Moreover, within the complex, also recruits the large microtubule-associated bicd-1-dlc-1-egal-1 and lis-1-nud-2 complexes to the nuclear envelope to regulate both the bidirectional migration of nuclei and the extent of nuclear migrations. Not required for centrosome attachment to the nucleus. In Caenorhabditis elegans, this protein is Nuclear migration protein unc-83.